Consider the following 103-residue polypeptide: Large ribosomal subunit protein bL21 (103 aa).

It belongs to the bacterial ribosomal protein bL21 family. As to quaternary structure, part of the 50S ribosomal subunit. Contacts protein L20.

Functionally, this protein binds to 23S rRNA in the presence of protein L20. The chain is Large ribosomal subunit protein bL21 from Borreliella burgdorferi (strain ZS7) (Borrelia burgdorferi).